Here is a 320-residue protein sequence, read N- to C-terminus: Cytochrome f (320 aa).

The first 36 residues, M1 to A36, serve as a signal peptide directing secretion. Residues F37, C57, C60, and H61 each contribute to the heme site. Residues I286–L305 traverse the membrane as a helical segment.

Belongs to the cytochrome f family. As to quaternary structure, the 4 large subunits of the cytochrome b6-f complex are cytochrome b6, subunit IV (17 kDa polypeptide, petD), cytochrome f and the Rieske protein, while the 4 small subunits are PetG, PetL, PetM and PetN. The complex functions as a dimer. It depends on heme as a cofactor.

It is found in the plastid. It localises to the chloroplast thylakoid membrane. Functionally, component of the cytochrome b6-f complex, which mediates electron transfer between photosystem II (PSII) and photosystem I (PSI), cyclic electron flow around PSI, and state transitions. This is Cytochrome f (petA) from Porphyra purpurea (Red seaweed).